We begin with the raw amino-acid sequence, 484 residues long: Ureidoglycolate hydrolase (484 aa).

A signal peptide spans 1 to 28; that stretch reads MATSAAARFLAALAGAAVLLVLLGGAAG. 4 residues coordinate Mn(2+): His-148, Asp-159, Glu-194, and His-262. 2 substrate regions span residues 193–194 and 262–265; these read EE and HIEQ. Positions 284–399 are involved in dimerization; that stretch reads APASIKVEFE…LSEFKIINQD (116 aa). His-298, Asn-348, and Arg-361 together coordinate substrate. The interval 431–432 is substrate; the sequence is YH. Position 456 (His-456) interacts with Mn(2+). Residue His-456 coordinates substrate.

It belongs to the peptidase M20 family. Homodimer. It depends on Mn(2+) as a cofactor. Ni(2+) is required as a cofactor. Co(2+) serves as cofactor.

It is found in the endoplasmic reticulum. It carries out the reaction (S)-ureidoglycolate + H2O + 2 H(+) = glyoxylate + 2 NH4(+) + CO2. Its pathway is nitrogen metabolism; (S)-allantoin degradation; glyoxylate from (S)-ureidoglycolate: step 1/1. Its function is as follows. Involved in the catabolism of purine nucleotides. The sequential activity of AAH, UGLYAH and UAH allows a complete purine breakdown without the intermediate generation of urea. In Oryza sativa subsp. japonica (Rice), this protein is Ureidoglycolate hydrolase.